A 98-amino-acid chain; its full sequence is Thrombin-like enzyme cerastotin (98 aa).

The Peptidase S1 domain occupies 1–98 (VIGGAECNIN…IKKPVNGSTH (98 aa)). Active-site charge relay system residues include H41 and D85. N94 carries an N-linked (GlcNAc...) asparagine glycan.

The protein belongs to the peptidase S1 family. Snake venom subfamily. In terms of assembly, monomer. As to expression, expressed by the venom gland.

Its subcellular location is the secreted. Inhibited by PMSF. Thrombin-like snake venom serine protease that preferentially cleaves the alpha-chain of fibrinogen (FGA). Induce platelet aggregation in the presence of exogenous fibrinogen. Possesses esterase and amidolytic activities. This Cerastes cerastes (Horned desert viper) protein is Thrombin-like enzyme cerastotin.